A 330-amino-acid chain; its full sequence is BTB/POZ domain-containing adapter for CUL3-mediated RhoA degradation protein 1 (330 aa).

A disordered region spans residues 1 to 34; the sequence is MSAEASGSSGGHAVTVSGSSPSSSSHVGEEKPGR. The BTB domain occupies 40–108; the sequence is KYVKLNVGGT…LRDGTVPLPD (69 aa). Residues 282–291 show a composition bias toward low complexity; the sequence is GGVSSSGAGQ. Residues 282-304 are disordered; that stretch reads GGVSSSGAGQSEEEGAGAGGGDR.

It belongs to the BACURD family.

It is found in the nucleus. Functionally, substrate-specific adapter of a BCR (BTB-CUL3-RBX1) E3 ubiquitin-protein ligase complex required for synaptic transmission. The BCR(KCTD13) E3 ubiquitin ligase complex mediates the ubiquitination of RHOA, leading to its degradation by the proteasome, thereby regulating the actin cytoskeleton and promoting synaptic transmission. This is BTB/POZ domain-containing adapter for CUL3-mediated RhoA degradation protein 1 from Danio rerio (Zebrafish).